The primary structure comprises 282 residues: Succinate dehydrogenase [ubiquinone] iron-sulfur subunit, mitochondrial (282 aa).

The transit peptide at 1–30 (MAAVVGVSLKRGFSATALGRVGLQFQACRE) directs the protein to the mitochondrion. 2 positions are modified to N6-acetyllysine: K53 and K57. The 2Fe-2S ferredoxin-type domain maps to 56 to 135 (DKPRMQTYKV…VSKIYPLPHM (80 aa)). Positions 95, 100, 103, and 115 each coordinate [2Fe-2S] cluster. Residues 148-220 (FYAQYKSIEP…PAVLMQAYRW (73 aa)) form an interaction with SDHAF1 region. A 4Fe-4S ferredoxin-type domain is found at 178-208 (DREKLDGLYECILCACCSTSCPSYWWNGDKY). The [4Fe-4S] cluster site is built by C188, C191, and C194. C198 is a binding site for [3Fe-4S] cluster. W203 lines the a ubiquinone pocket. [3Fe-4S] cluster is bound by residues C245 and C251. [4Fe-4S] cluster is bound at residue C255.

The protein belongs to the succinate dehydrogenase/fumarate reductase iron-sulfur protein family. In terms of assembly, component of complex II composed of four subunits: the flavoprotein (FP) SDHA, iron-sulfur protein (IP) SDHB, and a cytochrome b560 composed of SDHC and SDHD. Interacts with SDHAF1; the interaction is required for iron-sulfur cluster incorporation into SDHB. [2Fe-2S] cluster serves as cofactor. Requires [3Fe-4S] cluster as cofactor. It depends on [4Fe-4S] cluster as a cofactor.

The protein resides in the mitochondrion inner membrane. It catalyses the reaction a quinone + succinate = fumarate + a quinol. It carries out the reaction (R)-malate + a quinone = enol-oxaloacetate + a quinol. The catalysed reaction is (S)-malate + a quinone = enol-oxaloacetate + a quinol. The protein operates within carbohydrate metabolism; tricarboxylic acid cycle; fumarate from succinate (eukaryal route): step 1/1. Its activity is regulated as follows. Enol-oxaloacetate inhibits the succinate dehydrogenase activity. In terms of biological role, iron-sulfur protein (IP) subunit of the succinate dehydrogenase complex (mitochondrial respiratory chain complex II), responsible for transferring electrons from succinate to ubiquinone (coenzyme Q). SDH also oxidizes malate to the non-canonical enol form of oxaloacetate, enol-oxaloacetate. Enol-oxaloacetate, which is a potent inhibitor of the succinate dehydrogenase activity, is further isomerized into keto-oxaloacetate. This is Succinate dehydrogenase [ubiquinone] iron-sulfur subunit, mitochondrial (Sdhb) from Rattus norvegicus (Rat).